We begin with the raw amino-acid sequence, 445 residues long: MAAPEERDLTQEQTEKLLQFQDLTGIESMDQCRHTLEQHNWNIEAAVQDRLNEQEGVPSVFNPPPSRPLQVNTADHRIYSYVVSRPQPRGLLGWGYYLIMLPFRFTYYTILDIFRFALRFIRPDPRNRVTDPVGDIVSFMHSFEEKYGRAHPVFYLGTYSQALNDAKRELRFLLVYLHGDDHQDSDEFCRNTLCAPEVISLINTRMLFWACSTNKPEGYRVSQALRENTYPFLAMIMLKDRRMTVVGRLEGLIQPDDLINQLTFIMDANQTYLVSERLEREERNQTQVLRQQQDEAYLASLRADQEKERKKREERERKRRKEEEVQQQKLAEERRRRNLQEEKERKLECLPPEPSPDDPESVKIIFKLPNDSRVERRFHFSQSLTVIHDFLFSLKESPEKFQIEANFPRRVLPCLPSEEWPNPPTLQEAGLSHTEVLFVQDLTDE.

N-acetylalanine is present on alanine 2. The UBA domain maps to 12–48 (EQTEKLLQFQDLTGIESMDQCRHTLEQHNWNIEAAVQ). At lysine 167 the chain carries N6-acetyllysine. Residues 275–350 (SERLEREERN…EEKERKLECL (76 aa)) are a coiled coil. A disordered region spans residues 299-361 (ASLRADQEKE…PEPSPDDPES (63 aa)). Residues 303–348 (ADQEKERKKREERERKRRKEEEVQQQKLAEERRRRNLQEEKERKLE) are compositionally biased toward basic and acidic residues. The UBX domain occupies 357 to 439 (DDPESVKIIF…GLSHTEVLFV (83 aa)).

Identified in a complex that contains SEL1L, OS9, FAF2/UBXD8, UBE2J1/UBC6E and AUP1. Interacts with YOD1. Interacts (via N-terminus) with UBQLN2 (via C-terminus). Interacts with PNPLA2 and UBAC2. Interacts with ZFAND2B; probably through VCP. Interacts with LMBR1L.

The protein resides in the cytoplasm. Its subcellular location is the lipid droplet. It is found in the endoplasmic reticulum. In terms of biological role, plays an important role in endoplasmic reticulum-associated degradation (ERAD) that mediates ubiquitin-dependent degradation of misfolded endoplasmic reticulum proteins. By controlling the steady-state expression of the IGF1R receptor, indirectly regulates the insulin-like growth factor receptor signaling pathway. Involved in inhibition of lipid droplet degradation by binding to phospholipase PNPL2 and inhibiting its activity by promoting dissociation of PNPL2 from its endogenous activator, ABHD5 which inhibits the rate of triacylglycerol hydrolysis. Involved in stress granule disassembly: associates with ubiquitinated G3BP1 in response to heat shock, thereby promoting interaction between ubiquitinated G3BP1 and VCP, followed by G3BP1 extraction from stress granules and stress granule disassembly. This chain is FAS-associated factor 2 (FAF2), found in Bos taurus (Bovine).